The chain runs to 249 residues: DNA polymerase sliding clamp 1 (249 aa).

The protein belongs to the PCNA family. In terms of assembly, forms heterodimers with PCNA2, which then recruit PCNA3; does not form homotrimers. The heterodimers interact with RfcS homotetramers. Heterotrimer which circularizes head-to-tail (head is at N-terminus, tail is at C-terminus) to form a toroid; DNA passes through its center. Replication factor C (RFC) is required to load the toroid on the DNA. Heterotrimer interacts, probably via this subunit, with flap endonuclease 1 (fen), Hjc, Dpo4, and XPF.

Its function is as follows. One of the sliding clamp subunits that acts as a moving platform for DNA processing. Responsible for tethering the catalytic subunit of DNA polymerase to DNA during high-speed replication. Heterotrimer stimulates the Holliday junction resolvase Hjc. DNA polymerase I, DNA ligase and the flap endonuclease may be constitutively associated with the PCNA heterotrimer forming a scanning complex able to couple DNA synthesis and Okazaki fragment maturation. The sequence is that of DNA polymerase sliding clamp 1 from Saccharolobus solfataricus (strain ATCC 35092 / DSM 1617 / JCM 11322 / P2) (Sulfolobus solfataricus).